Here is a 315-residue protein sequence, read N- to C-terminus: N-acetyl-gamma-glutamyl-phosphate reductase (315 aa).

Residue C117 is part of the active site.

Belongs to the NAGSA dehydrogenase family. Type 2 subfamily.

It is found in the cytoplasm. The catalysed reaction is N-acetyl-L-glutamate 5-semialdehyde + phosphate + NADP(+) = N-acetyl-L-glutamyl 5-phosphate + NADPH + H(+). It participates in amino-acid biosynthesis; L-arginine biosynthesis; N(2)-acetyl-L-ornithine from L-glutamate: step 3/4. In terms of biological role, catalyzes the NADPH-dependent reduction of N-acetyl-5-glutamyl phosphate to yield N-acetyl-L-glutamate 5-semialdehyde. The chain is N-acetyl-gamma-glutamyl-phosphate reductase from Burkholderia ambifaria (strain ATCC BAA-244 / DSM 16087 / CCUG 44356 / LMG 19182 / AMMD) (Burkholderia cepacia (strain AMMD)).